Here is a 31-residue protein sequence, read N- to C-terminus: Photosystem II reaction center protein T (31 aa).

The chain crosses the membrane as a helical span at residues 3 to 23 (ALVYTFLLVGTLGIIFFSIFF).

This sequence belongs to the PsbT family. In terms of assembly, PSII is composed of 1 copy each of membrane proteins PsbA, PsbB, PsbC, PsbD, PsbE, PsbF, PsbH, PsbI, PsbJ, PsbK, PsbL, PsbM, PsbT, PsbY, PsbZ, Psb30/Ycf12, at least 3 peripheral proteins of the oxygen-evolving complex and a large number of cofactors. It forms dimeric complexes.

It localises to the plastid. Its subcellular location is the chloroplast thylakoid membrane. Functionally, found at the monomer-monomer interface of the photosystem II (PS II) dimer, plays a role in assembly and dimerization of PSII. PSII is a light-driven water plastoquinone oxidoreductase, using light energy to abstract electrons from H(2)O, generating a proton gradient subsequently used for ATP formation. The polypeptide is Photosystem II reaction center protein T (Chlamydomonas reinhardtii (Chlamydomonas smithii)).